Reading from the N-terminus, the 414-residue chain is uncharacterized protein (414 aa).

Positions 1-18 are cleaved as a signal peptide; the sequence is MLKRLMLASAILPVVSFA.

This is an uncharacterized protein from Aquifex aeolicus (strain VF5).